The following is a 358-amino-acid chain: DNA ligase C (358 aa).

Catalysis depends on Lys-29, which acts as the N6-AMP-lysine intermediate.

Belongs to the ATP-dependent DNA ligase family. The cofactor is a divalent metal cation.

The catalysed reaction is ATP + (deoxyribonucleotide)n-3'-hydroxyl + 5'-phospho-(deoxyribonucleotide)m = (deoxyribonucleotide)n+m + AMP + diphosphate.. Functionally, DNA ligase that seals nicks in double-stranded DNA during DNA replication, DNA recombination and DNA repair. The chain is DNA ligase C (ligC) from Mycobacterium tuberculosis (strain ATCC 25618 / H37Rv).